Consider the following 481-residue polypeptide: Neuronal acetylcholine receptor subunit eat-2 (481 aa).

An N-terminal signal peptide occupies residues 1-19 (MFLLLQILYILLFLNLADT). The Extracellular segment spans residues 20–235 (SDDEYRLLKD…MHLKRRTMYY (216 aa)). Residue Asn93 is glycosylated (N-linked (GlcNAc...) asparagine). Cysteines 147 and 161 form a disulfide. The next 3 membrane-spanning stretches (helical) occupy residues 236-256 (GLNWIIPSILISLSNILGFTM), 264-284 (VTLQITNFLSIMVFLAMVSEV), and 292-312 (IPIIAAFFSFAIVILGVSICV). Residues 313 to 443 (SLITVNIFYR…WRFMAMVIDR (131 aa)) lie on the Cytoplasmic side of the membrane. Residues 356 to 384 (KPKREKKKEEEEDEESNAGGKEEESELIS) are disordered. The helical transmembrane segment at 444-464 (ASLFLFTGLIFGTTFVIFAAC) threads the bilayer.

The protein belongs to the ligand-gated ion channel (TC 1.A.9) family. Acetylcholine receptor (TC 1.A.9.1) subfamily. As to quaternary structure, neuronal AChR seems to be composed of two different type of subunits: alpha and beta.

Its subcellular location is the postsynaptic cell membrane. It is found in the cell membrane. After binding acetylcholine, the AChR responds by an extensive change in conformation that affects all subunits and leads to opening of an ion-conducting channel across the plasma membrane. Nicotinic acetylcholine receptor in the MC pharyngeal motor neuron involved in pharyngeal pumping. Has a role in the determination of life span possibly via calorific restriction which affects growth rate, although this is independent of metabolic activity. In Caenorhabditis briggsae, this protein is Neuronal acetylcholine receptor subunit eat-2.